The sequence spans 517 residues: Probable bifunctional methylthioribulose-1-phosphate dehydratase/enolase-phosphatase E1 1 (517 aa).

The segment at 1-240 (MAAAALNGLK…AIKLYQLGLD (240 aa)) is methylthioribulose-1-phosphate dehydratase. C112 contributes to the substrate binding site. Zn(2+)-binding residues include H130 and H132. The Proton donor/acceptor; for methylthioribulose-1-phosphate dehydratase activity role is filled by E155. H205 is a binding site for Zn(2+). Positions 278–517 (IVLDIEGTTT…FKTITSFSDI (240 aa)) are enolase-phosphatase E1. The Mg(2+) site is built by D281 and E283. Residues 416-417 (SS) and K450 each bind substrate. D476 is a Mg(2+) binding site.

This sequence in the N-terminal section; belongs to the aldolase class II family. MtnB subfamily. It in the C-terminal section; belongs to the HAD-like hydrolase superfamily. MasA/MtnC family. Zn(2+) is required as a cofactor. It depends on Mg(2+) as a cofactor.

It catalyses the reaction 5-(methylsulfanyl)-D-ribulose 1-phosphate = 5-methylsulfanyl-2,3-dioxopentyl phosphate + H2O. The enzyme catalyses 5-methylsulfanyl-2,3-dioxopentyl phosphate + H2O = 1,2-dihydroxy-5-(methylsulfanyl)pent-1-en-3-one + phosphate. It participates in amino-acid biosynthesis; L-methionine biosynthesis via salvage pathway; L-methionine from S-methyl-5-thio-alpha-D-ribose 1-phosphate: step 2/6. Its pathway is amino-acid biosynthesis; L-methionine biosynthesis via salvage pathway; L-methionine from S-methyl-5-thio-alpha-D-ribose 1-phosphate: step 3/6. The protein operates within amino-acid biosynthesis; L-methionine biosynthesis via salvage pathway; L-methionine from S-methyl-5-thio-alpha-D-ribose 1-phosphate: step 4/6. The protein is Probable bifunctional methylthioribulose-1-phosphate dehydratase/enolase-phosphatase E1 1 of Vitis vinifera (Grape).